Consider the following 383-residue polypeptide: Queuine tRNA-ribosyltransferase (383 aa).

Aspartate 92 functions as the Proton acceptor in the catalytic mechanism. Substrate is bound by residues 92-96 (DSGGF), aspartate 146, glutamine 190, and glycine 217. Residues 248–254 (GVGKPED) are RNA binding. Aspartate 267 (nucleophile) is an active-site residue. An RNA binding; important for wobble base 34 recognition region spans residues 272–276 (TRNAR). 4 residues coordinate Zn(2+): cysteine 310, cysteine 312, cysteine 315, and histidine 341.

Belongs to the queuine tRNA-ribosyltransferase family. As to quaternary structure, homodimer. Within each dimer, one monomer is responsible for RNA recognition and catalysis, while the other monomer binds to the replacement base PreQ1. Zn(2+) is required as a cofactor.

The catalysed reaction is 7-aminomethyl-7-carbaguanine + guanosine(34) in tRNA = 7-aminomethyl-7-carbaguanosine(34) in tRNA + guanine. It functions in the pathway tRNA modification; tRNA-queuosine biosynthesis. Functionally, catalyzes the base-exchange of a guanine (G) residue with the queuine precursor 7-aminomethyl-7-deazaguanine (PreQ1) at position 34 (anticodon wobble position) in tRNAs with GU(N) anticodons (tRNA-Asp, -Asn, -His and -Tyr). Catalysis occurs through a double-displacement mechanism. The nucleophile active site attacks the C1' of nucleotide 34 to detach the guanine base from the RNA, forming a covalent enzyme-RNA intermediate. The proton acceptor active site deprotonates the incoming PreQ1, allowing a nucleophilic attack on the C1' of the ribose to form the product. After dissociation, two additional enzymatic reactions on the tRNA convert PreQ1 to queuine (Q), resulting in the hypermodified nucleoside queuosine (7-(((4,5-cis-dihydroxy-2-cyclopenten-1-yl)amino)methyl)-7-deazaguanosine). This Psychrobacter sp. (strain PRwf-1) protein is Queuine tRNA-ribosyltransferase.